A 754-amino-acid polypeptide reads, in one-letter code: Phosphoinositide 3-kinase regulatory subunit 6 (754 aa).

Residues 343 to 363 (ERDLPTGADELPAPGSPEMER) form a disordered region.

Heterodimer of a catalytic subunit (PIK3CG) and a regulatory (PIK3R6) subunit. The binding of PIK3R6 to PIK3CG may exclude the binding of PIK3R5 to PIK3CG. Interacts with beta-gamma G protein dimers. Interacts with PDE3B and RAPGEF3; form a signaling complex that regulates phosphatidylinositol 3-kinase gamma in angiogenesis.

It is found in the cytoplasm. The protein resides in the cell membrane. Functionally, regulatory subunit of the PI3K gamma complex. Acts as an adapter to drive activation of PIK3CG by beta-gamma G protein dimers. The PIK3CG:PIK3R6 heterodimer is much less sensitive to beta-gamma G protein dimers than PIK3CG:PIK3R5 and its membrane recruitment and beta-gamma G protein dimer-dependent activation requires HRAS bound to PIK3CG. Recruits of the PI3K gamma complex to a PDE3B:RAPGEF3 signaling complex involved in angiogenesis; signaling seems to involve RRAS. This Homo sapiens (Human) protein is Phosphoinositide 3-kinase regulatory subunit 6 (PIK3R6).